Reading from the N-terminus, the 424-residue chain is Probable carboxypeptidase AN5749 (424 aa).

An N-terminal signal peptide occupies residues 1–17 (MNLSILAALALVSFSTA). Asn58 is a glycosylation site (N-linked (GlcNAc...) asparagine). Zn(2+) is bound at residue Asp139. Catalysis depends on Glu171, which acts as the Proton acceptor. Residue Glu172 coordinates Zn(2+). N-linked (GlcNAc...) asparagine glycosylation is found at Asn184 and Asn323.

Belongs to the peptidase M20A family. Zn(2+) is required as a cofactor.

It localises to the secreted. The protein is Probable carboxypeptidase AN5749 of Emericella nidulans (strain FGSC A4 / ATCC 38163 / CBS 112.46 / NRRL 194 / M139) (Aspergillus nidulans).